Reading from the N-terminus, the 483-residue chain is ATP synthase subunit beta (483 aa).

ATP is bound at residue 162–169 (GGAGVGKT).

Belongs to the ATPase alpha/beta chains family. F-type ATPases have 2 components, CF(1) - the catalytic core - and CF(0) - the membrane proton channel. CF(1) has five subunits: alpha(3), beta(3), gamma(1), delta(1), epsilon(1). CF(0) has four main subunits: a(1), b(1), b'(1) and c(9-12).

It is found in the cellular thylakoid membrane. The catalysed reaction is ATP + H2O + 4 H(+)(in) = ADP + phosphate + 5 H(+)(out). In terms of biological role, produces ATP from ADP in the presence of a proton gradient across the membrane. The catalytic sites are hosted primarily by the beta subunits. The polypeptide is ATP synthase subunit beta (Rippkaea orientalis (strain PCC 8801 / RF-1) (Cyanothece sp. (strain PCC 8801))).